A 525-amino-acid polypeptide reads, in one-letter code: Neuropilin and tolloid-like protein 2 (525 aa).

The N-terminal stretch at 1–22 (MALERLCSVLKVLLITVLVVEG) is a signal peptide. The Extracellular portion of the chain corresponds to 23-347 (IAVAQKTQDG…GVFEQITKTH (325 aa)). 7 cysteine pairs are disulfide-bonded: cysteine 45-cysteine 72, cysteine 100-cysteine 122, cysteine 177-cysteine 207, cysteine 234-cysteine 256, cysteine 297-cysteine 309, cysteine 304-cysteine 322, and cysteine 316-cysteine 331. 2 CUB domains span residues 45–159 (CGIW…YSFI) and 177–292 (CQFE…FTSF). The LDL-receptor class A domain occupies 296–332 (PCTSSTFFCHSNMCINNSLVCNGVQNCAYPWDENHCK). Asparagine 311 carries N-linked (GlcNAc...) asparagine glycosylation. Residues 348–368 (GTIIGITSGIVLVLLIISILV) form a helical membrane-spanning segment. Topologically, residues 369–525 (QVKQPRKKVM…SAQASISIDF (157 aa)) are cytoplasmic. Residue serine 409 is modified to Phosphoserine.

Interacts with GRIK2 and GRIK3, but neither with AMPA-nor with NMDA-sensitive glutamate receptors. Post-translationally, N-glycosylated.

It is found in the membrane. Its function is as follows. Accessory subunit of neuronal kainate-sensitive glutamate receptors, GRIK2 and GRIK3. Increases kainate-receptor channel activity, slowing the decay kinetics of the receptors, without affecting their expression at the cell surface, and increasing the open probability of the receptor channels. Modulates the agonist sensitivity of kainate receptors. Slows the decay of kainate receptor-mediated excitatory postsynaptic currents (EPSCs), thus directly influencing synaptic transmission. In Homo sapiens (Human), this protein is Neuropilin and tolloid-like protein 2 (NETO2).